The primary structure comprises 142 residues: Galactose-binding lectin (142 aa).

The region spanning 1–141 is the Galectin domain; sequence TYAEVESFGV…GTDIWDLLLL (141 aa).

As to quaternary structure, homotetramer.

Its activity is regulated as follows. Cytotoxic activity against L.infantum promastigotes is completely inhibited by D-galactose. Inhibition activity against biofilm formation by S.aureus and S.epidermidis is inhibited by alpha-lactose. Hemagglutination activity is inhibited by alpha-lactose (MIC=100 mM), beta-lactose (MIC=100 mM), lactulose (MIC=100 mM), bovine submaxillary mucin (BSM) (MIC=32 ug/ml), fetuin (MIC=16 ug/ml), porcine stomach mucin (PSM) type 2 (MIC=8 ug/ml) and PSM type 3 (MIC=8 ug/ml). Its function is as follows. Galactose-binding lectin. Displays antibacterial and hemagglutinin activity. Inhibits the growth of L.infantum promastigotes by damaging their membrane integrity and inducing cell apoptosis via the production of reactive oxygen species (ROS). Inhibition of L.infantum promastigotes appears to increase with time (MIC=1.2 uM/ml after 24 hours, MIC=0.9 uM/ml after 48 hours and MIC=0.6 uM/ml after 72 hours). Agglutinates Gram-negative and Gram-positive bacteria including E.coli, S.aureus and S.epidermidis, and inhibits biofilm formation by S.aureus and S.epidermidis. Displays hemagglutination activity towards all types of human erythrocytes (O, A and B) and rabbit erythrocytes. This is Galactose-binding lectin from Chondrilla caribensis (Chicken liver sponge).